A 390-amino-acid chain; its full sequence is Na(+)/H(+) antiporter NhaA (390 aa).

A run of 12 helical transmembrane segments spans residues 14–34 (AAGGIVLIAAAALAMLLANLN), 61–81 (MLLWVNDALMAVFFLLVGLEV), 97–117 (SLPVIAALGGMVLPAALYLAF), 126–146 (AGWAIPAATDIAFALGILALL), 156–176 (VFLMALAIIDDLGAIVIIALF), 181–201 (LSMVSLMVAAGAIAVLAVLNL), 221–241 (VLKSGVHATLAGVIIGFFVPL), 256–276 (ALHPWVGFLILPLFAFANAGV), 280–300 (GVTLAGLASLLPLGIIAGLFI), 305–325 (GISLFCALAVKLKWATLPPGV), 330–350 (ILAVGVLCGIGFTMSIFIASL), and 362–382 (WAKLGILVGSLLAAVIGYALL).

Belongs to the NhaA Na(+)/H(+) (TC 2.A.33) antiporter family.

It is found in the cell inner membrane. It catalyses the reaction Na(+)(in) + 2 H(+)(out) = Na(+)(out) + 2 H(+)(in). Na(+)/H(+) antiporter that extrudes sodium in exchange for external protons. This is Na(+)/H(+) antiporter NhaA from Cronobacter sakazakii (strain ATCC BAA-894) (Enterobacter sakazakii).